The primary structure comprises 391 residues: MTLVAITYTRGSLHILNQLLLPHQTTYDPLHSARDAWHAIHEMRVRGAPAIAIVAALSLAVELHTLATSNQLSAEPKDVGQLILEKLEFLVSSRPTAVNLAEAAGRLGRIVNGRAQVQGVGGNEVAEAYIEAAERMLDDDVRDNRAIGESGAKWVLEHAITKGSISGTGQAKVAVLTHCNTGSLATAGYGTALGVIRSLHATGSLERAYCTETRPYNQGSRLTAFELVHDNIPATLITDSMAAALLARQSAGPAQSVGVSAIIVGADRVAANGDTANKIGTYGLAVLAKYHGVKFLVAAPRTTIDMNTKTGADIVIEERPEKEVTRIRGPRDGEEGNGLGAMETITVAADGIGVWNPAFDVTPAALVDGIITEVGVVEKDGSGVFHLERIF.

Residue aspartate 267 is the Proton donor of the active site.

The protein belongs to the eIF-2B alpha/beta/delta subunits family. MtnA subfamily.

It is found in the cytoplasm. The protein localises to the nucleus. The catalysed reaction is 5-(methylsulfanyl)-alpha-D-ribose 1-phosphate = 5-(methylsulfanyl)-D-ribulose 1-phosphate. It participates in amino-acid biosynthesis; L-methionine biosynthesis via salvage pathway; L-methionine from S-methyl-5-thio-alpha-D-ribose 1-phosphate: step 1/6. Its function is as follows. Catalyzes the interconversion of methylthioribose-1-phosphate (MTR-1-P) into methylthioribulose-1-phosphate (MTRu-1-P). The sequence is that of Methylthioribose-1-phosphate isomerase from Ajellomyces capsulatus (strain NAm1 / WU24) (Darling's disease fungus).